Reading from the N-terminus, the 600-residue chain is Aspartate--tRNA ligase (600 aa).

Position 175 (Glu175) interacts with L-aspartate. Positions 199–202 (QLFK) are aspartate. Arg221 serves as a coordination point for L-aspartate. Residues 221-223 (RDE) and Gln230 each bind ATP. An L-aspartate-binding site is contributed by His448. An ATP-binding site is contributed by Glu484. Position 491 (Arg491) interacts with L-aspartate. 536–539 (GLDR) serves as a coordination point for ATP.

Belongs to the class-II aminoacyl-tRNA synthetase family. Type 1 subfamily. Homodimer.

Its subcellular location is the cytoplasm. The enzyme catalyses tRNA(Asp) + L-aspartate + ATP = L-aspartyl-tRNA(Asp) + AMP + diphosphate. Functionally, catalyzes the attachment of L-aspartate to tRNA(Asp) in a two-step reaction: L-aspartate is first activated by ATP to form Asp-AMP and then transferred to the acceptor end of tRNA(Asp). This chain is Aspartate--tRNA ligase, found in Limosilactobacillus reuteri (strain DSM 20016) (Lactobacillus reuteri).